Consider the following 168-residue polypeptide: uncharacterized protein (168 aa).

The span at 1 to 15 (MKEASDREEAPKMVE) shows a compositional bias: basic and acidic residues. The segment at 1–36 (MKEASDREEAPKMVEKNYSTGFRKAHGEKDQSVTKP) is disordered.

Its subcellular location is the cytoplasm. This is an uncharacterized protein from Saccharomyces cerevisiae (strain ATCC 204508 / S288c) (Baker's yeast).